We begin with the raw amino-acid sequence, 147 residues long: uncharacterized protein (147 aa).

A run of 2 helical transmembrane segments spans residues 4 to 26 (YLRV…FFWG) and 123 to 145 (YALC…RAYF).

The protein localises to the cell membrane. This is an uncharacterized protein from Treponema pallidum (strain Nichols).